Consider the following 227-residue polypeptide: Cytochrome c oxidase subunit 2 (227 aa).

At 1–14 the chain is on the mitochondrial intermembrane side; that stretch reads MAYPFQLGLQDATS. Residues 15 to 45 form a helical membrane-spanning segment; the sequence is PIMEELTNFHDHTLMIVFLISSLVLYIISSM. Topologically, residues 46–59 are mitochondrial matrix; it reads LATKMTHTSTMDAQ. A helical transmembrane segment spans residues 60–87; that stretch reads SMETIWTILPAVILVLIALPSLRILYMM. Residues 88 to 227 lie on the Mitochondrial intermembrane side of the membrane; it reads DEINNPVLTV…FFENWSASMI (140 aa). Cu cation is bound by residues His-161, Cys-196, Glu-198, Cys-200, His-204, and Met-207. Glu-198 serves as a coordination point for Mg(2+).

It belongs to the cytochrome c oxidase subunit 2 family. In terms of assembly, component of the cytochrome c oxidase (complex IV, CIV), a multisubunit enzyme composed of 14 subunits. The complex is composed of a catalytic core of 3 subunits MT-CO1, MT-CO2 and MT-CO3, encoded in the mitochondrial DNA, and 11 supernumerary subunits COX4I, COX5A, COX5B, COX6A, COX6B, COX6C, COX7A, COX7B, COX7C, COX8 and NDUFA4, which are encoded in the nuclear genome. The complex exists as a monomer or a dimer and forms supercomplexes (SCs) in the inner mitochondrial membrane with NADH-ubiquinone oxidoreductase (complex I, CI) and ubiquinol-cytochrome c oxidoreductase (cytochrome b-c1 complex, complex III, CIII), resulting in different assemblies (supercomplex SCI(1)III(2)IV(1) and megacomplex MCI(2)III(2)IV(2)). Found in a complex with TMEM177, COA6, COX18, COX20, SCO1 and SCO2. Interacts with TMEM177 in a COX20-dependent manner. Interacts with COX20. Interacts with COX16. The cofactor is Cu cation.

Its subcellular location is the mitochondrion inner membrane. The catalysed reaction is 4 Fe(II)-[cytochrome c] + O2 + 8 H(+)(in) = 4 Fe(III)-[cytochrome c] + 2 H2O + 4 H(+)(out). Component of the cytochrome c oxidase, the last enzyme in the mitochondrial electron transport chain which drives oxidative phosphorylation. The respiratory chain contains 3 multisubunit complexes succinate dehydrogenase (complex II, CII), ubiquinol-cytochrome c oxidoreductase (cytochrome b-c1 complex, complex III, CIII) and cytochrome c oxidase (complex IV, CIV), that cooperate to transfer electrons derived from NADH and succinate to molecular oxygen, creating an electrochemical gradient over the inner membrane that drives transmembrane transport and the ATP synthase. Cytochrome c oxidase is the component of the respiratory chain that catalyzes the reduction of oxygen to water. Electrons originating from reduced cytochrome c in the intermembrane space (IMS) are transferred via the dinuclear copper A center (CU(A)) of subunit 2 and heme A of subunit 1 to the active site in subunit 1, a binuclear center (BNC) formed by heme A3 and copper B (CU(B)). The BNC reduces molecular oxygen to 2 water molecules using 4 electrons from cytochrome c in the IMS and 4 protons from the mitochondrial matrix. This chain is Cytochrome c oxidase subunit 2 (MT-CO2), found in Acomys wilsoni (Wilson's spiny mouse).